Here is a 580-residue protein sequence, read N- to C-terminus: Putative multidrug export ATP-binding/permease protein YgaD (580 aa).

At 1-17 (MGVMKRYMQFVKPYKKQ) the chain is on the cytoplasmic side. A helical membrane pass occupies residues 18–38 (IFVTVLIGIVKFSIPLALPLL). The ABC transmembrane type-1 domain maps to 19-307 (FVTVLIGIVK…LINSSTTLTQ (289 aa)). Residues 39-57 (LKYVVDDIIQGGGTASDKT) are Extracellular-facing. Residues 58-78 (TSLFTIMAIMFALFLILRPPV) traverse the membrane as a helical segment. Residues 79–135 (EYYRQYFAQWTASKVLYDIRAKLFDHIQKLSLRFYANTRTGEVISRVINDVEQTKDF) are Cytoplasmic-facing. Residues 136 to 156 (VITGLMNIWLDMLTILIVISI) form a helical membrane-spanning segment. Residues 157-163 (MLTLDVK) are Extracellular-facing. Residues 164–184 (LTLISIVLFPLYGISVKYFYG) form a helical membrane-spanning segment. The Cytoplasmic portion of the chain corresponds to 185-243 (RLRKLTRERSQALAQVQGHLHERIQGMPVIRSFAIEDHEQAQFNEKNGHFLDKAIRHTN). Residues 244-263 (WNAKTFAVVNTITDLAPLIV) traverse the membrane as a helical segment. Residues 264–268 (IACAG) lie on the Extracellular side of the membrane. A helical transmembrane segment spans residues 269-288 (YFVINGPLTVGTMVAFVGYI). Residues 289 to 580 (DRMYNPVRRL…KHLFTIQNLN (292 aa)) are Cytoplasmic-facing. In terms of domain architecture, ABC transporter spans 341–576 (VEFQNVSFQY…ESQYKHLFTI (236 aa)). An ATP-binding site is contributed by 375–382 (GMSGGGKS).

It belongs to the ABC transporter superfamily. As to quaternary structure, homodimer.

Its subcellular location is the cell membrane. Its function is as follows. May be involved in multidrug export. Transmembrane domains (TMD) form a pore in the cell membrane and the ATP-binding domain (NBD) is responsible for energy generation. This chain is Putative multidrug export ATP-binding/permease protein YgaD (ygaD), found in Bacillus subtilis (strain 168).